Reading from the N-terminus, the 198-residue chain is RxLR effector protein CRE4 (198 aa).

Residues M1 to P20 form the signal peptide. A RxLR-dEER motif is present at residues R43–R52.

It belongs to the RxLR effector family.

The protein resides in the secreted. It is found in the host cytoplasm. The protein localises to the host nucleus. Its subcellular location is the host nucleolus. Its function is as follows. Effector that is involved in host plant infection. Contributes to virulence during the early infection stage, by inhibiting plant defense responses induced by both PAMP-triggered immunity (PTI) and effector-triggered immunity (ETI). The protein is RxLR effector protein CRE4 (CRE4) of Phytophthora infestans (strain T30-4) (Potato late blight agent).